Reading from the N-terminus, the 104-residue chain is Small ribosomal subunit protein uS10 (104 aa).

This sequence belongs to the universal ribosomal protein uS10 family. As to quaternary structure, part of the 30S ribosomal subunit.

Functionally, involved in the binding of tRNA to the ribosomes. The sequence is that of Small ribosomal subunit protein uS10 from Maricaulis maris (strain MCS10) (Caulobacter maris).